Here is a 690-residue protein sequence, read N- to C-terminus: Exonuclease GOR (690 aa).

2 disordered regions span residues 136–162 (TRVA…NRSG) and 567–690 (QPRH…SLHH). Residues 585 to 595 (APSTTAISPES) show a composition bias toward polar residues. Over residues 605–614 (KETGAVDGRR) the composition is skewed to basic and acidic residues. Positions 612 to 626 (GRRGQKAKSNPNRPL) are GOR14-1 epitope. A compositionally biased stretch (low complexity) spans 631–646 (NPCRGPSGLSPSLCPS). Positions 661–682 (PPLPVPRVPAAPPRACPHPSAH) are enriched in pro residues.

This sequence belongs to the REXO1/REXO3 family.

The protein localises to the cytoplasm. It is found in the nucleus. The polypeptide is Exonuclease GOR (REXO1L1) (Pan troglodytes (Chimpanzee)).